The following is a 256-amino-acid chain: DNA repair protein RecO (256 aa).

The protein belongs to the RecO family.

In terms of biological role, involved in DNA repair and RecF pathway recombination. This is DNA repair protein RecO from Rhizobium etli (strain ATCC 51251 / DSM 11541 / JCM 21823 / NBRC 15573 / CFN 42).